We begin with the raw amino-acid sequence, 1273 residues long: Ribulose bisphosphate carboxylase small subunit, chloroplastic (1273 aa).

The transit peptide at 1–134 (MPFDRQPLLS…AVLPFTSEKD (134 aa)) directs the protein to the chloroplast. 7 propeptides span residues 269–278 (GMAAMTGEKD), 412–421 (GMAAMTGEKD), 556–565 (GMAAMTGEKD), 699–708 (GMAAMTGEKD), 844–853 (GMAAMTGEKE), 987–996 (GMAAMTGEKD), and 1131–1140 (GMAAMTGEKE).

The protein belongs to the RuBisCO small chain family. In terms of assembly, heterohexadecamer of 8 large and 8 small subunits. Eight small subunits are processed from a large polyprotein. All start with the same sequence but there is more heterogeneity at the C-terminus.

The protein resides in the plastid. Its subcellular location is the chloroplast. In terms of biological role, ruBisCO catalyzes two reactions: the carboxylation of D-ribulose 1,5-bisphosphate, the primary event in carbon dioxide fixation, as well as the oxidative fragmentation of the pentose substrate. Both reactions occur simultaneously and in competition at the same active site. Although the small subunit is not catalytic it is essential for maximal activity. This chain is Ribulose bisphosphate carboxylase small subunit, chloroplastic, found in Euglena gracilis.